A 607-amino-acid chain; its full sequence is CUB and zona pellucida-like domain-containing protein 1 (607 aa).

The N-terminal stretch at 1-19 is a signal peptide; it reads MEVTGRLFIWAILAVSCGA. Cys-17 and Cys-58 are oxidised to a cystine. CUB domains lie at 20-146 and 154-265; these read QLNS…YFFS and CGGD…YTSI. The Lumenal segment spans residues 20-568; it reads QLNSTEAEGK…AEISNQPLSR (549 aa). N-linked (GlcNAc...) asparagine glycans are attached at residues Asn-22, Asn-57, and Asn-67. 3 disulfide bridges follow: Cys-85-Cys-107, Cys-154-Cys-180, and Cys-207-Cys-229. The region spanning 276–519 is the ZP domain; it reads SCVSDKMRVI…SRCNQGCVPR (244 aa). A glycan (N-linked (GlcNAc...) asparagine) is linked at Asn-419. A disulfide bond links Cys-442 and Cys-498. A helical transmembrane segment spans residues 569 to 589; sequence LYLFSFMVLALNVVIVAITTV. Residues 590–607 lie on the Cytoplasmic side of the membrane; the sequence is KHFLNRWMDHRYQKLQVY.

Highly expressed in pancreatic acinar cells. Also expressed in epithelium of the uterus during late pregnancy but not detected in non-pregnant uterus or in a variety of other adult and fetal tissues.

It is found in the zymogen granule membrane. Functionally, localized to zymogen granules, where it functions in trypsinogen activation. May indirectly regulate cell motility, cell-cell and cell/extracellular matrix interactions. This is CUB and zona pellucida-like domain-containing protein 1 from Mus musculus (Mouse).